A 66-amino-acid chain; its full sequence is uncharacterized protein (66 aa).

This is an uncharacterized protein from Bacillus subtilis (strain 168).